Here is a 164-residue protein sequence, read N- to C-terminus: Pheromone-binding protein 2 (164 aa).

Residues 1 to 22 form the signal peptide; the sequence is MIRKVLLSVLLAVLMTINLGQA. Intrachain disulfides connect Cys-41–Cys-76, Cys-72–Cys-130, and Cys-119–Cys-139.

The protein belongs to the PBP/GOBP family. In terms of tissue distribution, antenna.

In terms of biological role, this major soluble protein in olfactory sensilla of male moths might serve to solubilize the extremely hydrophobic pheromone molecules and to transport pheromone through the aqueous lymph to receptors located on olfactory cilia. The polypeptide is Pheromone-binding protein 2 (Antheraea pernyi (Chinese oak silk moth)).